Here is a 294-residue protein sequence, read N- to C-terminus: Eukaryotic translation initiation factor 3 subunit G (294 aa).

Disordered regions lie at residues methionine 1 to isoleucine 43 and glutamate 160 to threonine 211. Residues glycine 194 to threonine 211 are compositionally biased toward basic and acidic residues. The RRM domain maps to alanine 212–proline 290.

Belongs to the eIF-3 subunit G family. In terms of assembly, component of the eukaryotic translation initiation factor 3 (eIF-3) complex.

It is found in the cytoplasm. Functionally, RNA-binding component of the eukaryotic translation initiation factor 3 (eIF-3) complex, which is involved in protein synthesis of a specialized repertoire of mRNAs and, together with other initiation factors, stimulates binding of mRNA and methionyl-tRNAi to the 40S ribosome. The eIF-3 complex specifically targets and initiates translation of a subset of mRNAs involved in cell proliferation. This subunit can bind 18S rRNA. The protein is Eukaryotic translation initiation factor 3 subunit G of Nematostella vectensis (Starlet sea anemone).